An 803-amino-acid polypeptide reads, in one-letter code: Bromodomain-containing protein 2 (803 aa).

The residue at position 1 (Met-1) is an N-acetylmethionine. At Thr-6 the chain carries Phosphothreonine. Ser-37 is modified (phosphoserine). The tract at residues 53–73 (ALQLTPANPPPPEVSNPKKPG) is disordered. A Bromo 1 domain is found at 74–180 (RVTNQLQYLH…KIFLQKVASM (107 aa)). A protein-binding residues include Asp-112, Tyr-155, Asn-156, Lys-157, Asp-160, and Asp-161. 3 disordered regions span residues 268–348 (PPAQ…KLSE), 456–652 (EPLE…KRQL), and 739–803 (EKRL…SDSG). A compositionally biased stretch (low complexity) spans 285-298 (TTTPTPTAILAPGS). Phosphoserine is present on residues Ser-298 and Ser-301. Residues 316-332 (VRRESGRPIKPPRKDLP) are compositionally biased toward basic and acidic residues. Positions 344–453 (GKLSEQLKHC…DVFEFRYAKM (110 aa)) constitute a Bromo 2 domain. Residues 481-515 (SSEESSSESSSEEEEEEDEDEEEEEEESESSDSEE) show a composition bias toward acidic residues. A compositionally biased stretch (basic residues) spans 545 to 567 (KPKRKREKKEKKKKRKAEKHRGR). A Nuclear localization signal motif is present at residues 556–560 (KKKRK). The span at 623–632 (KTAPPALPAG) shows a compositional bias: low complexity. An NET domain is found at 634–716 (DSEEEEESRP…SCLRKKPRKP (83 aa)). Residue Ser-635 is modified to Phosphoserine. Positions 641–652 (SRPMSYDEKRQL) are enriched in basic and acidic residues. A compositionally biased stretch (low complexity) spans 777–797 (SASSSSSDSSSSSSSSSSSDT).

Belongs to the BET family. As to quaternary structure, homodimer. Interacts with E2F1. Interacts with (acetylated) STAT3; promoting STAT3 recruitment to chromatin. Interacts with CTCF; promoting BRD2 recruitment to chromatin.

It is found in the nucleus. The protein localises to the chromosome. Functionally, chromatin reader protein that specifically recognizes and binds histone H4 acetylated at 'Lys-5' and 'Lys-12' (H4K5ac and H4K12ac, respectively), thereby controlling gene expression and remodeling chromatin structures. Recruits transcription factors and coactivators to target gene sites, and activates RNA polymerase II machinery for transcriptional elongation. Plays a key role in genome compartmentalization via its association with CTCF and cohesin: recruited to chromatin by CTCF and promotes formation of topologically associating domains (TADs) via its ability to bind acetylated histones, contributing to CTCF boundary formation and enhancer insulation. Also recognizes and binds acetylated non-histone proteins, such as STAT3. Involved in inflammatory response by regulating differentiation of naive CD4(+) T-cells into T-helper Th17: recognizes and binds STAT3 acetylated at 'Lys-87', promoting STAT3 recruitment to chromatin. In addition to acetylated lysines, also recognizes and binds lysine residues on histones that are both methylated and acetylated on the same side chain to form N6-acetyl-N6-methyllysine (Kacme), an epigenetic mark of active chromatin associated with increased transcriptional initiation. Specifically binds histone H4 acetyl-methylated at 'Lys-5' and 'Lys-12' (H4K5acme and H4K12acme, respectively). The polypeptide is Bromodomain-containing protein 2 (BRD2) (Bos taurus (Bovine)).